Consider the following 881-residue polypeptide: Serine/threonine-protein phosphatase BSL1 (881 aa).

Kelch repeat units follow at residues 60–109 (GSSS…AVGT), 269–320 (RLHV…DQDP), and 338–385 (RIYV…PRFS). Disordered stretches follow at residues 368 to 407 (SPLL…LSLD) and 436 to 464 (AGTL…ANEG). 2 stretches are compositionally biased toward polar residues: residues 374-383 (DRTQQSSTPR) and 445-460 (TSDA…TDGT). Ser491 carries the post-translational modification Phosphoserine. The tract at residues 503–522 (VPMNNSDVPQPTKKFTRQKS) is disordered. Asp584, His586, Asp618, and Asn650 together coordinate Mn(2+). His651 functions as the Proton donor in the catalytic mechanism. Mn(2+)-binding residues include His703 and His782. Residues 837–881 (ILSPENSPEHSGDDAWMQELNIQRPPTPTRGRPQPDFDRSSLAYI) are disordered. Ser839 is subject to Phosphoserine.

Belongs to the PPP phosphatase family. BSU subfamily. In terms of assembly, interacts with CDG1 and CDL1. It depends on Mn(2+) as a cofactor. As to expression, expressed in mature cauline leaves and at the tip of influorescence, including flowers. Expressed at lower level in young tissues relative to older ones.

Its subcellular location is the nucleus. It catalyses the reaction O-phospho-L-seryl-[protein] + H2O = L-seryl-[protein] + phosphate. The enzyme catalyses O-phospho-L-threonyl-[protein] + H2O = L-threonyl-[protein] + phosphate. Its function is as follows. Phosphatase involved in elongation process, probably by acting as a regulator of brassinolide signaling. The polypeptide is Serine/threonine-protein phosphatase BSL1 (BSL1) (Arabidopsis thaliana (Mouse-ear cress)).